The sequence spans 289 residues: Formamidopyrimidine-DNA glycosylase (289 aa).

P2 (schiff-base intermediate with DNA) is an active-site residue. The active-site Proton donor is the E3. The Proton donor; for beta-elimination activity role is filled by K61. Residues H96, R115, and K161 each contribute to the DNA site. The segment at S247–P281 adopts an FPG-type zinc-finger fold. Catalysis depends on R271, which acts as the Proton donor; for delta-elimination activity.

This sequence belongs to the FPG family. In terms of assembly, monomer. It depends on Zn(2+) as a cofactor.

The enzyme catalyses Hydrolysis of DNA containing ring-opened 7-methylguanine residues, releasing 2,6-diamino-4-hydroxy-5-(N-methyl)formamidopyrimidine.. It carries out the reaction 2'-deoxyribonucleotide-(2'-deoxyribose 5'-phosphate)-2'-deoxyribonucleotide-DNA = a 3'-end 2'-deoxyribonucleotide-(2,3-dehydro-2,3-deoxyribose 5'-phosphate)-DNA + a 5'-end 5'-phospho-2'-deoxyribonucleoside-DNA + H(+). Its function is as follows. Involved in base excision repair of DNA damaged by oxidation or by mutagenic agents. Acts as a DNA glycosylase that recognizes and removes damaged bases. Has a preference for oxidized purines, such as 7,8-dihydro-8-oxoguanine (8-oxoG). Has AP (apurinic/apyrimidinic) lyase activity and introduces nicks in the DNA strand. Cleaves the DNA backbone by beta-delta elimination to generate a single-strand break at the site of the removed base with both 3'- and 5'-phosphates. This Rhodococcus erythropolis (strain PR4 / NBRC 100887) protein is Formamidopyrimidine-DNA glycosylase.